The sequence spans 316 residues: Nucleotide-binding protein Sala_2050 (316 aa).

18–25 is a binding site for ATP; the sequence is GLSGAGKS. Residue 69–72 coordinates GTP; it reads DSRS. The interval 283-316 is disordered; sequence GYEPTLTHRNLDSAPQDGLEGKPPSAARASGGAR.

It belongs to the RapZ-like family.

Functionally, displays ATPase and GTPase activities. This chain is Nucleotide-binding protein Sala_2050, found in Sphingopyxis alaskensis (strain DSM 13593 / LMG 18877 / RB2256) (Sphingomonas alaskensis).